The following is a 379-amino-acid chain: Queuine tRNA-ribosyltransferase (379 aa).

The Proton acceptor role is filled by aspartate 96. Substrate is bound by residues 96–100 (DSGGF), aspartate 150, glutamine 196, and glycine 223. Residues 254–260 (GIGTPDY) form an RNA binding region. Aspartate 273 serves as the catalytic Nucleophile. Positions 311, 313, 316, and 342 each coordinate Zn(2+).

This sequence belongs to the queuine tRNA-ribosyltransferase family. As to quaternary structure, homodimer. Within each dimer, one monomer is responsible for RNA recognition and catalysis, while the other monomer binds to the replacement base PreQ1. The cofactor is Zn(2+).

It catalyses the reaction 7-aminomethyl-7-carbaguanine + guanosine(34) in tRNA = 7-aminomethyl-7-carbaguanosine(34) in tRNA + guanine. The protein operates within tRNA modification; tRNA-queuosine biosynthesis. Catalyzes the base-exchange of a guanine (G) residue with the queuine precursor 7-aminomethyl-7-deazaguanine (PreQ1) at position 34 (anticodon wobble position) in tRNAs with GU(N) anticodons (tRNA-Asp, -Asn, -His and -Tyr). Catalysis occurs through a double-displacement mechanism. The nucleophile active site attacks the C1' of nucleotide 34 to detach the guanine base from the RNA, forming a covalent enzyme-RNA intermediate. The proton acceptor active site deprotonates the incoming PreQ1, allowing a nucleophilic attack on the C1' of the ribose to form the product. After dissociation, two additional enzymatic reactions on the tRNA convert PreQ1 to queuine (Q), resulting in the hypermodified nucleoside queuosine (7-(((4,5-cis-dihydroxy-2-cyclopenten-1-yl)amino)methyl)-7-deazaguanosine). This chain is Queuine tRNA-ribosyltransferase, found in Treponema denticola (strain ATCC 35405 / DSM 14222 / CIP 103919 / JCM 8153 / KCTC 15104).